Consider the following 122-residue polypeptide: UPF0102 protein CPR_1677 (122 aa).

It belongs to the UPF0102 family.

The protein is UPF0102 protein CPR_1677 of Clostridium perfringens (strain SM101 / Type A).